Here is a 317-residue protein sequence, read N- to C-terminus: MNVLLMAYGTPYAPEEVEPYYTDIRRGRRPSEELLKELAERYEAIGKSPLNEITLAQAVRLQALLNLEAPPYPKRLLGPFPPRAPHGPARVYVGTKHWHPSIGEAVAAMHEDGVRRAVAIVAAPHYSLRSVAEYREKVDSALKTLPEPIDFVWVESYEAHPGLIAAYARRLEEVIWRLKNPGKAAYVFTAHSIPLSAVEKGDPYPRQVEKTAELIAKKLALPRFHVAYQSAGRTPEPWLGPDINELLRTLKEEGYEEVAVQAVGFPADHLEVFYDLDLEAQATARELGLRLLRARSLNADLDYIQVLKDLVEAAWPR.

The Fe cation site is built by His-191 and Glu-271.

The protein belongs to the ferrochelatase family.

It is found in the cytoplasm. It carries out the reaction heme b + 2 H(+) = protoporphyrin IX + Fe(2+). It functions in the pathway porphyrin-containing compound metabolism; protoheme biosynthesis; protoheme from protoporphyrin-IX: step 1/1. Its function is as follows. Catalyzes the ferrous insertion into protoporphyrin IX. In Thermus thermophilus (strain ATCC BAA-163 / DSM 7039 / HB27), this protein is Ferrochelatase.